The primary structure comprises 266 residues: Putative pyruvate, phosphate dikinase regulatory protein (266 aa).

149–156 (GVSRTSKT) contacts ADP.

The protein belongs to the pyruvate, phosphate/water dikinase regulatory protein family. PDRP subfamily.

The enzyme catalyses N(tele)-phospho-L-histidyl/L-threonyl-[pyruvate, phosphate dikinase] + ADP = N(tele)-phospho-L-histidyl/O-phospho-L-threonyl-[pyruvate, phosphate dikinase] + AMP + H(+). It catalyses the reaction N(tele)-phospho-L-histidyl/O-phospho-L-threonyl-[pyruvate, phosphate dikinase] + phosphate + H(+) = N(tele)-phospho-L-histidyl/L-threonyl-[pyruvate, phosphate dikinase] + diphosphate. Its function is as follows. Bifunctional serine/threonine kinase and phosphorylase involved in the regulation of the pyruvate, phosphate dikinase (PPDK) by catalyzing its phosphorylation/dephosphorylation. The sequence is that of Putative pyruvate, phosphate dikinase regulatory protein from Geobacillus kaustophilus (strain HTA426).